Consider the following 176-residue polypeptide: Scytalone dehydratase-like protein AacuK (176 aa).

Substrate is bound by residues tyrosine 26 and tyrosine 46. Active-site residues include histidine 81 and histidine 107.

The protein belongs to the scytalone dehydratase family.

The protein operates within secondary metabolite biosynthesis. In terms of biological role, scytalone dehydratase-like protein; part of the gene cluster that mediates the biosynthesis of the tetrahydroxanthone dimer secalonic acid D. The pathway begins with the synthesis of atrochrysone thioester by the polyketide synthase AacuL. The atrochrysone carboxyl ACP thioesterase AacuM then breaks the thioester bond and releases the atrochrysone carboxylic acid from AacuL. Atrochrysone carboxylic acid is decarboxylated by the decarboxylase AacuI, and oxidized by the anthrone oxygenase AacuG to yield emodin. Emodin is then reduced to emodin hydroquinone by a yet unidentified oxidoreductase. A-ring reduction by the short chain dehydrogenase AacuN, dehydration by the scytalone dehydratase-like protein AacuK and probable spontaneous re-oxidation, results in overall deoxygenation to chrysophanol. Baeyer-Villiger oxidation by the Baeyer-Villiger monooxygenase (BVMO) AacuH then yields monodictyphenone. Monodictyphenone is transformed into compounds with the tetrahydroxanthone skeleton via methylesterification by the methyltransferase AacuQ, followed by the action of the flavin-dependent monooxygenase AacuC, the isomerase AacuP, and the short chain dehydrogenase/reductase AacuF or AacuD. AacuF and AacuD should accept the same compound as a substrate but perform the ketoreduction with a different stereoselectivity, thus yielding blennolides B and A, respectively. In the final step of the biosynthesis, the cytochrome P450 monooxygenase AacuE accepts blennolide B and/or blennolide A to conduct the dimerization reaction to furnish the tetrahydroxanthone dimers, secalonic acids D, B, and F. This is Scytalone dehydratase-like protein AacuK from Aspergillus aculeatus (strain ATCC 16872 / CBS 172.66 / WB 5094).